A 205-amino-acid chain; its full sequence is Holliday junction branch migration complex subunit RuvA (205 aa).

Residues 1-64 (MIGKLKGSIE…EDQLKLFGFV (64 aa)) form a domain I region. Positions 65–143 (SALEREWFNL…AFAGDASASI (79 aa)) are domain II. Residues 144–153 (GLKQELGEGV) are flexible linker. Residues 153–205 (VASAPVADAVSALTNLGYSRDQAANAVAAALKNGGEGGDSAKLIRLGLKELSR) form a domain III region.

This sequence belongs to the RuvA family. In terms of assembly, homotetramer. Forms an RuvA(8)-RuvB(12)-Holliday junction (HJ) complex. HJ DNA is sandwiched between 2 RuvA tetramers; dsDNA enters through RuvA and exits via RuvB. An RuvB hexamer assembles on each DNA strand where it exits the tetramer. Each RuvB hexamer is contacted by two RuvA subunits (via domain III) on 2 adjacent RuvB subunits; this complex drives branch migration. In the full resolvosome a probable DNA-RuvA(4)-RuvB(12)-RuvC(2) complex forms which resolves the HJ.

It is found in the cytoplasm. In terms of biological role, the RuvA-RuvB-RuvC complex processes Holliday junction (HJ) DNA during genetic recombination and DNA repair, while the RuvA-RuvB complex plays an important role in the rescue of blocked DNA replication forks via replication fork reversal (RFR). RuvA specifically binds to HJ cruciform DNA, conferring on it an open structure. The RuvB hexamer acts as an ATP-dependent pump, pulling dsDNA into and through the RuvAB complex. HJ branch migration allows RuvC to scan DNA until it finds its consensus sequence, where it cleaves and resolves the cruciform DNA. In Agrobacterium fabrum (strain C58 / ATCC 33970) (Agrobacterium tumefaciens (strain C58)), this protein is Holliday junction branch migration complex subunit RuvA.